Consider the following 338-residue polypeptide: Heat-inducible transcription repressor HrcA (338 aa).

Belongs to the HrcA family.

In terms of biological role, negative regulator of class I heat shock genes (grpE-dnaK-dnaJ and groELS operons). Prevents heat-shock induction of these operons. The sequence is that of Heat-inducible transcription repressor HrcA from Nitrosomonas europaea (strain ATCC 19718 / CIP 103999 / KCTC 2705 / NBRC 14298).